Consider the following 432-residue polypeptide: Adenylosuccinate synthetase (432 aa).

Residues 13–19 (GDEGKGK) and 41–43 (GHT) each bind GTP. Asp14 serves as the catalytic Proton acceptor. Positions 14 and 41 each coordinate Mg(2+). Residues 14-17 (DEGK), 39-42 (NAGH), Thr130, Arg144, Gln225, Thr240, and Arg304 contribute to the IMP site. The Proton donor role is filled by His42. 300–306 (ATTGRRR) contacts substrate. GTP contacts are provided by residues Arg306, 332 to 334 (KLD), and 415 to 417 (STG).

Belongs to the adenylosuccinate synthetase family. Homodimer. Mg(2+) serves as cofactor.

It is found in the cytoplasm. It carries out the reaction IMP + L-aspartate + GTP = N(6)-(1,2-dicarboxyethyl)-AMP + GDP + phosphate + 2 H(+). It participates in purine metabolism; AMP biosynthesis via de novo pathway; AMP from IMP: step 1/2. Plays an important role in the de novo pathway of purine nucleotide biosynthesis. Catalyzes the first committed step in the biosynthesis of AMP from IMP. This Klebsiella pneumoniae subsp. pneumoniae (strain ATCC 700721 / MGH 78578) protein is Adenylosuccinate synthetase.